The primary structure comprises 418 residues: Creatine kinase U-type, mitochondrial (418 aa).

Residues 1–39 (MAGPFSRLLSARPGLKLLALAGAGSLAAGILLRPESVRA) constitute a mitochondrion transit peptide. The tract at residues 40 to 64 (ATGERRRLYPPSAEYPDLRKHNNCM) is cardiolipin-binding. Positions 46–132 (RLYPPSAEYP…FDPVIQERHN (87 aa)) constitute a Phosphagen kinase N-terminal domain. Serine 152 carries the post-translational modification Phosphoserine. A Phosphagen kinase C-terminal domain is found at 159 to 401 (YVLSSRVRTG…NYLIDCERRL (243 aa)). 162–166 (SSRVR) lines the ATP pocket. Serine 197 is subject to Phosphoserine. Residue threonine 214 is modified to Phosphothreonine. ATP is bound at residue histidine 225. Serine 233 is subject to Phosphoserine. ATP-binding positions include arginine 270, arginine 326, 354-359 (RGTGGV), and aspartate 369. The residue at position 356 (threonine 356) is a Phosphothreonine.

It belongs to the ATP:guanido phosphotransferase family. Exists as an octamer composed of four MTCK homodimers. In many tissues, with highest levels in brain gut and kidney. In the kidney localized primarily in the outer medulla in the thick ascending limb and distal convoluted tubule.

It is found in the mitochondrion inner membrane. The catalysed reaction is creatine + ATP = N-phosphocreatine + ADP + H(+). Its function is as follows. Reversibly catalyzes the transfer of phosphate between ATP and various phosphogens (e.g. creatine phosphate). Creatine kinase isoenzymes play a central role in energy transduction in tissues with large, fluctuating energy demands, such as skeletal muscle, heart, brain and spermatozoa. The protein is Creatine kinase U-type, mitochondrial (Ckmt1) of Rattus norvegicus (Rat).